The sequence spans 261 residues: Thiazole synthase (261 aa).

Residue K95 is the Schiff-base intermediate with DXP of the active site. Residues G156, 182–183 (AG), and 204–205 (NT) each bind 1-deoxy-D-xylulose 5-phosphate.

Belongs to the ThiG family. As to quaternary structure, homotetramer. Forms heterodimers with either ThiH or ThiS.

It is found in the cytoplasm. The enzyme catalyses [ThiS sulfur-carrier protein]-C-terminal-Gly-aminoethanethioate + 2-iminoacetate + 1-deoxy-D-xylulose 5-phosphate = [ThiS sulfur-carrier protein]-C-terminal Gly-Gly + 2-[(2R,5Z)-2-carboxy-4-methylthiazol-5(2H)-ylidene]ethyl phosphate + 2 H2O + H(+). The protein operates within cofactor biosynthesis; thiamine diphosphate biosynthesis. Catalyzes the rearrangement of 1-deoxy-D-xylulose 5-phosphate (DXP) to produce the thiazole phosphate moiety of thiamine. Sulfur is provided by the thiocarboxylate moiety of the carrier protein ThiS. In vitro, sulfur can be provided by H(2)S. The protein is Thiazole synthase of Pectobacterium atrosepticum (strain SCRI 1043 / ATCC BAA-672) (Erwinia carotovora subsp. atroseptica).